The following is a 555-amino-acid chain: Polypyrimidine tract-binding protein 1 (555 aa).

M1 is modified (N-acetylmethionine). S16 carries the phosphoserine modification. RRM domains follow at residues 58–142, 183–259, and 361–412; these read RVIH…SSPN, LRII…FSKL, and SVLL…SQAQ. A Glycyl lysine isopeptide (Lys-Gly) (interchain with G-Cter in SUMO2) cross-link involves residue K64. Phosphotyrosine is present on Y126. At T137 the chain carries Phosphothreonine. At S140 the chain carries Phosphoserine. A Glycyl lysine isopeptide (Lys-Gly) (interchain with G-Cter in SUMO2) cross-link involves residue K217. The interval 435–457 is disordered; it reads HQSVQLPREGQEDQGLTKDYGSS. S457 is modified (phosphoserine). In terms of domain architecture, RRM 4 spans 478–553; it reads ATLHLSNIPP…HHLRVSFSKS (76 aa).

In terms of assembly, monomer. Part of a ternary complex containing KHSRP, PTBP1, PTBP2 and HNRPH1. Interacts with SFPQ. Interacts with RAVER1. Interacts with IVNS1ABP (via BACK domain); the interaction is direct. As to expression, expressed in myoblast; expression gradually decreases during muscle cell differentiation (at protein level).

The protein resides in the nucleus. Its function is as follows. Plays a role in pre-mRNA splicing and in the regulation of alternative splicing events. Activates exon skipping of its own pre-mRNA during muscle cell differentiation. Binds to the polypyrimidine tract of introns. May promote RNA looping when bound to two separate polypyrimidine tracts in the same pre-mRNA. May promote the binding of U2 snRNP to pre-mRNA. Cooperates with RAVER1 to modulate switching between mutually exclusive exons during maturation of the TPM1 pre-mRNA. Represses the splicing of MAPT/Tau exon 10. Binds to polypyrimidine-rich controlling element (PCE) of CFTR and promotes exon skipping of CFTR exon 9, thereby antagonizing TIA1 and its role in exon inclusion of CFTR exon 9. Plays a role in the splicing of pyruvate kinase PKM by binding repressively to a polypyrimidine tract flanking PKM exon 9, inhibiting exon 9 inclusion and resulting in exon 10 inclusion and production of the PKM M2 isoform. The protein is Polypyrimidine tract-binding protein 1 (Ptbp1) of Mus musculus (Mouse).